The primary structure comprises 155 residues: Large ribosomal subunit protein uL30 (155 aa).

This sequence belongs to the universal ribosomal protein uL30 family. As to quaternary structure, part of the 50S ribosomal subunit.

The sequence is that of Large ribosomal subunit protein uL30 from Nanoarchaeum equitans (strain Kin4-M).